Here is a 432-residue protein sequence, read N- to C-terminus: Phosphoribosylamine--glycine ligase (432 aa).

One can recognise an ATP-grasp domain in the interval 110 to 316; sequence RNFMKDNDIE…MIDVMSAVVN (207 aa). An ATP-binding site is contributed by 137–194; it reads IEELGSVAIKPAGLTGGKGVKVMGDQLPDTGAAYDYAVSLLDGDNVVVEENLVGEEFT. 3 residues coordinate Mg(2+): glutamine 274, glutamate 286, and asparagine 288. Residues glutamine 274, glutamate 286, and asparagine 288 each contribute to the Mn(2+) site.

The protein belongs to the GARS family. The cofactor is Mg(2+). Mn(2+) is required as a cofactor.

The catalysed reaction is 5-phospho-beta-D-ribosylamine + glycine + ATP = N(1)-(5-phospho-beta-D-ribosyl)glycinamide + ADP + phosphate + H(+). It participates in purine metabolism; IMP biosynthesis via de novo pathway; N(1)-(5-phospho-D-ribosyl)glycinamide from 5-phospho-alpha-D-ribose 1-diphosphate: step 2/2. In Methanococcoides burtonii (strain DSM 6242 / NBRC 107633 / OCM 468 / ACE-M), this protein is Phosphoribosylamine--glycine ligase.